The following is a 157-amino-acid chain: MFDILMYLFENYVHSEVELLVDEDELTQELTRAGFHQSAIIKALSWLEHLASLQESDQPYLCNHDQHSFRIYTQAEMEKLDVECRGFLLFLEQIKVLNVELREMVIDRVMELDEPALILEDLKWVILMVLFNVPGNESAYEQMEDLIFEQPDGRLHS.

Belongs to the Smg family.

In Shewanella loihica (strain ATCC BAA-1088 / PV-4), this protein is Protein Smg homolog.